Reading from the N-terminus, the 342-residue chain is Non-homologous end-joining protein 1 (342 aa).

2 helical membrane-spanning segments follow: residues 27-47 (LLLF…LVSL) and 129-149 (MFYM…NLST). The interaction with LIF1 stretch occupies residues 173-342 (LRDLDGGSKV…RKFGKVRIKN (170 aa)). Residues 270-342 (ADPTNEARPN…RKFGKVRIKN (73 aa)) are disordered. The segment covering 286 to 296 (PKTDFKPKSRE) has biased composition (basic and acidic residues). Positions 297–312 (SSTSSQLRLENFSESE) are enriched in polar residues. Positions 331-342 (KKRKFGKVRIKN) are enriched in basic residues.

It belongs to the XRCC4-XLF family. XLF subfamily. Interacts (via C-terminus) with LIF1 (via N-terminus); the interaction is direct. Interacts with DNL4.

Its subcellular location is the cytoplasm. It is found in the nucleus membrane. Involved in non-homologous end joining (NHEJ). Facilitates the transport of LIF1 into the nucleus, where it can interact with DNA ligase DNL4 to repair double-strand breaks (DSB). Mediates mating-type regulation of NHEJ. Prevents chromosome circularisation by NHEJ in absence of telomerase. This chain is Non-homologous end-joining protein 1 (NEJ1), found in Saccharomyces cerevisiae (strain ATCC 204508 / S288c) (Baker's yeast).